A 132-amino-acid chain; its full sequence is DNA-directed RNA polymerase subunit omega (132 aa).

The protein belongs to the RNA polymerase subunit omega family. In terms of assembly, the RNAP catalytic core consists of 2 alpha, 1 beta, 1 beta' and 1 omega subunit. When a sigma factor is associated with the core the holoenzyme is formed, which can initiate transcription.

It carries out the reaction RNA(n) + a ribonucleoside 5'-triphosphate = RNA(n+1) + diphosphate. Functionally, promotes RNA polymerase assembly. Latches the N- and C-terminal regions of the beta' subunit thereby facilitating its interaction with the beta and alpha subunits. This Bartonella bacilliformis (strain ATCC 35685 / KC583 / Herrer 020/F12,63) protein is DNA-directed RNA polymerase subunit omega.